Here is an 846-residue protein sequence, read N- to C-terminus: FNIP repeat-containing protein DDB_G0289381 (846 aa).

The span at 1–11 (MKLLSFKKKPS) shows a compositional bias: basic residues. The tract at residues 1–39 (MKLLSFKKKPSLTKSQSCPDKLKNLKEQQKDPKNGANYD) is disordered. Over residues 20-33 (DKLKNLKEQQKDPK) the composition is skewed to basic and acidic residues. FNIP repeat units follow at residues 159–193 (IPNH…FGEK), 194–239 (FNQV…FGNN), 240–283 (FDQI…FQEN), and 284–325 (FNQP…YGGD). The disordered stretch occupies residues 362-384 (SSISLDISGGGSGSGSGVNSTTT). FNIP repeat units lie at residues 458-500 (FQQL…FGDG), 501-546 (FNQQ…FGKS), and 654-693 (FNQS…MFNK). Residues 702–734 (SNNNNENNNENNNENNNENNNENNNENNNNTNS) form a disordered region. The stretch at 702–734 (SNNNNENNNENNNENNNENNNENNNENNNNTNS) forms a coiled coil.

The sequence is that of FNIP repeat-containing protein DDB_G0289381 from Dictyostelium discoideum (Social amoeba).